A 437-amino-acid polypeptide reads, in one-letter code: Glutamate-1-semialdehyde 2,1-aminomutase (437 aa).

An N6-(pyridoxal phosphate)lysine modification is found at Lys-273.

This sequence belongs to the class-III pyridoxal-phosphate-dependent aminotransferase family. HemL subfamily. In terms of assembly, homodimer. Pyridoxal 5'-phosphate serves as cofactor.

It localises to the cytoplasm. The enzyme catalyses (S)-4-amino-5-oxopentanoate = 5-aminolevulinate. It functions in the pathway porphyrin-containing compound metabolism; protoporphyrin-IX biosynthesis; 5-aminolevulinate from L-glutamyl-tRNA(Glu): step 2/2. This chain is Glutamate-1-semialdehyde 2,1-aminomutase, found in Chlamydia caviae (strain ATCC VR-813 / DSM 19441 / 03DC25 / GPIC) (Chlamydophila caviae).